The sequence spans 612 residues: Dihydroxy-acid dehydratase (612 aa).

Residue aspartate 81 coordinates Mg(2+). Cysteine 122 contacts [2Fe-2S] cluster. 2 residues coordinate Mg(2+): aspartate 123 and lysine 124. The residue at position 124 (lysine 124) is an N6-carboxylysine. Cysteine 193 lines the [2Fe-2S] cluster pocket. Glutamate 489 lines the Mg(2+) pocket. Serine 515 acts as the Proton acceptor in catalysis.

This sequence belongs to the IlvD/Edd family. Homodimer. The cofactor is [2Fe-2S] cluster. Mg(2+) serves as cofactor.

It catalyses the reaction (2R)-2,3-dihydroxy-3-methylbutanoate = 3-methyl-2-oxobutanoate + H2O. The enzyme catalyses (2R,3R)-2,3-dihydroxy-3-methylpentanoate = (S)-3-methyl-2-oxopentanoate + H2O. It functions in the pathway amino-acid biosynthesis; L-isoleucine biosynthesis; L-isoleucine from 2-oxobutanoate: step 3/4. Its pathway is amino-acid biosynthesis; L-valine biosynthesis; L-valine from pyruvate: step 3/4. Its function is as follows. Functions in the biosynthesis of branched-chain amino acids. Catalyzes the dehydration of (2R,3R)-2,3-dihydroxy-3-methylpentanoate (2,3-dihydroxy-3-methylvalerate) into 2-oxo-3-methylpentanoate (2-oxo-3-methylvalerate) and of (2R)-2,3-dihydroxy-3-methylbutanoate (2,3-dihydroxyisovalerate) into 2-oxo-3-methylbutanoate (2-oxoisovalerate), the penultimate precursor to L-isoleucine and L-valine, respectively. This Xanthomonas campestris pv. campestris (strain 8004) protein is Dihydroxy-acid dehydratase.